The sequence spans 1004 residues: Centriolar coiled-coil protein of 110 kDa (1004 aa).

The CEP97 binding stretch occupies residues 1–221; that stretch reads MEEYEEFCEK…SCLAEVTPDP (221 aa). Residues 51–90 adopt a coiled-coil conformation; it reads EKRKKIQEEKQKALDVQSRKQANRKKALLTRVQEILENVQ. A calmodulin-binding region spans residues 64–82; that stretch reads LDVQSRKQANRKKALLTRV. Residues 67–82 form a required for interaction with CEP290 region; that stretch reads QSRKQANRKKALLTRV. 2 disordered regions span residues 147–194 and 239–279; these read PVNN…SSAS and RELS…APPM. S170 carries the post-translational modification Phosphoserine. The segment covering 243 to 252 has biased composition (low complexity); sequence SRSLRNSLKR. Over residues 253–276 the composition is skewed to basic and acidic residues; it reads SVNETHSDRENDAAKASDCVKEKA. Residues 349 to 564 are interaction with CEP76; the sequence is ENKVKSLKGP…QTQTSRQQMD (216 aa). 3 positions are modified to phosphoserine: S364, S370, and S398. A disordered region spans residues 401–433; it reads GKEEAVDRTAPAAAETTNESETVPKSPTDLTGV. Residues 415–433 show a composition bias toward polar residues; sequence ETTNESETVPKSPTDLTGV. The residue at position 550 (S550) is a Phosphoserine. Residues 641 to 699 adopt a coiled-coil conformation; that stretch reads QELLKSKMLAFEEMRKRLEEQHAQQLSLLIAEQEREQEQLQKEIEEQEKMLKEKAVTTD. Calmodulin-binding stretches follow at residues 773–813 and 901–916; these read GRAQ…DKLK and VALS…RKKF. Residues 955–1004 are disordered; that stretch reads LSRQGTPKTSVKGVVQNRQKPSQSRVPNRAPVSGAYAGKTQRKRPNVATI. Residues 970–980 are compositionally biased toward polar residues; sequence QNRQKPSQSRV. Over residues 994–1004 the composition is skewed to basic residues; that stretch reads TQRKRPNVATI.

In terms of assembly, interacts with CALM1, CETN2, CEP76, CEP104, CEP290 and TALPID3. Interacts with CEP97. Seems to associate with discrete CETN2, CEP97 and CEP290-containing complexes. Interacts with NEURL4 and CCNF; these interactions are not mutually exclusive and both lead to CCP110 ubiquitination and proteasome-dependent degradation. Via its interaction with NEURL4, may indirectly interact with HERC2. Interacts with KIF24, leading to its recruitment to centrioles. Interacts with USP20 and USP33. Interacts with MPHOSPH9. Interacts (via N-terminal region) with ENKD1 (via central region); ENKD1 competes with CEP97 for binding to CCP110, destabilizing the interaction between CP110 and CEP97 which promotes the removal of CCP110 and CEP97 from the mother centriole and allows the initiation of ciliogenesis. Phosphorylated by CDKs. Post-translationally, ubiquitinated by the SCF(CCNF) during G2 phase, leading to its degradation by the proteasome and preventing centrosome reduplication. Deubiquitinated by USP33 in S and G2/M phase, leading to stabilize CCP110 during the period which centrioles duplicate and elongate. Ubiquitinated by the EDVP complex, leading to its degradation.

The protein resides in the cytoplasm. It localises to the cytoskeleton. The protein localises to the microtubule organizing center. Its subcellular location is the centrosome. It is found in the centriole. The protein resides in the cilium basal body. Its function is as follows. Necessary for centrosome duplication at different stages of procentriole formation. Acts as a key negative regulator of ciliogenesis in collaboration with CEP97 by capping the mother centriole thereby preventing cilia formation. Also involved in promoting ciliogenesis. May play a role in the assembly of the mother centriole subdistal appendages (SDA) thereby effecting the fusion of recycling endosomes to basal bodies during cilia formation. Required for correct spindle formation and has a role in regulating cytokinesis and genome stability via cooperation with CALM1 and CETN2. This Mus musculus (Mouse) protein is Centriolar coiled-coil protein of 110 kDa (Ccp110).